The following is a 287-amino-acid chain: Light-independent protochlorophyllide reductase iron-sulfur ATP-binding protein (287 aa).

ATP contacts are provided by residues 10–15 (GVGKST) and Lys39. Ser14 contributes to the Mg(2+) binding site. Positions 95 and 129 each coordinate [4Fe-4S] cluster. Residue 181-182 (NR) participates in ATP binding.

Belongs to the NifH/BchL/ChlL family. Homodimer. Protochlorophyllide reductase is composed of three subunits; BchL, BchN and BchB. [4Fe-4S] cluster serves as cofactor.

The enzyme catalyses chlorophyllide a + oxidized 2[4Fe-4S]-[ferredoxin] + 2 ADP + 2 phosphate = protochlorophyllide a + reduced 2[4Fe-4S]-[ferredoxin] + 2 ATP + 2 H2O. Its pathway is porphyrin-containing compound metabolism; bacteriochlorophyll biosynthesis (light-independent). Functionally, component of the dark-operative protochlorophyllide reductase (DPOR) that uses Mg-ATP and reduced ferredoxin to reduce ring D of protochlorophyllide (Pchlide) to form chlorophyllide a (Chlide). This reaction is light-independent. The L component serves as a unique electron donor to the NB-component of the complex, and binds Mg-ATP. In Heliobacterium modesticaldum (strain ATCC 51547 / Ice1), this protein is Light-independent protochlorophyllide reductase iron-sulfur ATP-binding protein.